Consider the following 337-residue polypeptide: 5-dehydro-2-deoxygluconokinase (337 aa).

Belongs to the carbohydrate kinase PfkB family.

It carries out the reaction 5-dehydro-2-deoxy-D-gluconate + ATP = 6-phospho-5-dehydro-2-deoxy-D-gluconate + ADP + H(+). Its pathway is polyol metabolism; myo-inositol degradation into acetyl-CoA; acetyl-CoA from myo-inositol: step 5/7. Catalyzes the phosphorylation of 5-dehydro-2-deoxy-D-gluconate (2-deoxy-5-keto-D-gluconate or DKG) to 6-phospho-5-dehydro-2-deoxy-D-gluconate (DKGP). This is 5-dehydro-2-deoxygluconokinase from Geobacillus thermodenitrificans (strain NG80-2).